The chain runs to 126 residues: uncharacterized protein (126 aa).

Disordered stretches follow at residues 15 to 72 (PEWG…SDPQ) and 93 to 126 (TQIP…TTSN). Basic and acidic residues-rich tracts occupy residues 29–46 (DPLD…RVPE) and 55–64 (VQEDSREHGQ).

This is an uncharacterized protein from Homo sapiens (Human).